A 165-amino-acid chain; its full sequence is SsrA-binding protein (165 aa).

This sequence belongs to the SmpB family.

The protein localises to the cytoplasm. In terms of biological role, required for rescue of stalled ribosomes mediated by trans-translation. Binds to transfer-messenger RNA (tmRNA), required for stable association of tmRNA with ribosomes. tmRNA and SmpB together mimic tRNA shape, replacing the anticodon stem-loop with SmpB. tmRNA is encoded by the ssrA gene; the 2 termini fold to resemble tRNA(Ala) and it encodes a 'tag peptide', a short internal open reading frame. During trans-translation Ala-aminoacylated tmRNA acts like a tRNA, entering the A-site of stalled ribosomes, displacing the stalled mRNA. The ribosome then switches to translate the ORF on the tmRNA; the nascent peptide is terminated with the 'tag peptide' encoded by the tmRNA and targeted for degradation. The ribosome is freed to recommence translation, which seems to be the essential function of trans-translation. The polypeptide is SsrA-binding protein (Parvibaculum lavamentivorans (strain DS-1 / DSM 13023 / NCIMB 13966)).